The sequence spans 194 residues: Lysozyme g-like protein 1 (194 aa).

The signal sequence occupies residues 1 to 19 (MSALWLLLGLLALMDLSES). 2 disulfide bridges follow: C24–C80 and C38–C49.

It belongs to the glycosyl hydrolase 23 family.

The protein resides in the secreted. The protein is Lysozyme g-like protein 1 (LYG1) of Homo sapiens (Human).